We begin with the raw amino-acid sequence, 201 residues long: Small ribosomal subunit protein uS4 (201 aa).

Residues 22–47 form a disordered region; the sequence is TGKELARRPYAPGDHGNDRRGKLSEY. The 61-residue stretch at 93 to 153 folds into the S4 RNA-binding domain; sequence RRLDNMVYRL…EKSKNLDVIK (61 aa).

The protein belongs to the universal ribosomal protein uS4 family. As to quaternary structure, part of the 30S ribosomal subunit. Contacts protein S5. The interaction surface between S4 and S5 is involved in control of translational fidelity.

Functionally, one of the primary rRNA binding proteins, it binds directly to 16S rRNA where it nucleates assembly of the body of the 30S subunit. Its function is as follows. With S5 and S12 plays an important role in translational accuracy. This chain is Small ribosomal subunit protein uS4, found in Limosilactobacillus fermentum (strain NBRC 3956 / LMG 18251) (Lactobacillus fermentum).